Reading from the N-terminus, the 350-residue chain is Probable 2-dehydropantoate 2-reductase (350 aa).

NADP(+)-binding positions include 9 to 14 (GAGSIG) and N115. N115 contributes to the substrate binding site. The active-site Proton donor is K213. The substrate site is built by N217, N221, and S295. E307 contacts NADP(+).

This sequence belongs to the ketopantoate reductase family.

It carries out the reaction (R)-pantoate + NADP(+) = 2-dehydropantoate + NADPH + H(+). It participates in cofactor biosynthesis; (R)-pantothenate biosynthesis; (R)-pantoate from 3-methyl-2-oxobutanoate: step 2/2. Its function is as follows. Catalyzes the NADPH-dependent reduction of ketopantoate into pantoic acid. The chain is Probable 2-dehydropantoate 2-reductase from Schizosaccharomyces pombe (strain 972 / ATCC 24843) (Fission yeast).